The sequence spans 109 residues: U4-lycotoxin-Ls1b (109 aa).

Residues 1–22 (MKVLVLFSVLFLTLFSYSSTEA) form the signal peptide. Positions 23–44 (IDEFDSDAEDDMLSLMANEQVR) are excised as a propeptide. The segment at 45–88 (AKACTPRLHDCSHDRHSCCRGELSKDVCYCFYPEGEDKTEVCSC) is knottin domain. Intrachain disulfides connect Cys48–Cys63, Cys55–Cys72, Cys62–Cys88, and Cys74–Cys86. The linear cationic cytotoxin domain stretch occupies residues 89-108 (QQPKSHKYIEKVVDKAKTVV).

It belongs to the neurotoxin 19 (CSTX) family. 05 (U4-Lctx) subfamily. In terms of tissue distribution, expressed by the venom gland.

Its subcellular location is the secreted. Its function is as follows. Enhances the high-affinity desensitization of human P2RX3 purinoceptors. The polypeptide is U4-lycotoxin-Ls1b (Lycosa singoriensis (Wolf spider)).